A 198-amino-acid chain; its full sequence is Ribosome maturation factor RimM (198 aa).

Residues 1 to 21 (MPPPTASTPDDSADPGPDFAD) are disordered. The PRC barrel domain maps to 122–195 (DDELFADDLV…RIVVRPIDGL (74 aa)).

This sequence belongs to the RimM family. As to quaternary structure, binds ribosomal protein uS19.

Its subcellular location is the cytoplasm. Its function is as follows. An accessory protein needed during the final step in the assembly of 30S ribosomal subunit, possibly for assembly of the head region. Essential for efficient processing of 16S rRNA. May be needed both before and after RbfA during the maturation of 16S rRNA. It has affinity for free ribosomal 30S subunits but not for 70S ribosomes. This Salinibacter ruber (strain DSM 13855 / M31) protein is Ribosome maturation factor RimM.